The chain runs to 409 residues: bZIP transcription factor 16 (409 aa).

The segment covering 1 to 16 (MASNEMEKSSKEKEPK) has biased composition (basic and acidic residues). Disordered regions lie at residues 1 to 63 (MASN…VASS), 118 to 236 (NGMT…LPVS), 274 to 327 (MHGK…LRKQ), and 362 to 409 (TTEN…KDST). The segment covering 24–34 (APPSSQEPSSA) has biased composition (low complexity). Basic and acidic residues predominate over residues 133–145 (GDAKQSEVKEKLP). Residues 152–178 (SLGSLNMITGKNNEPGKNSGASANGAY) show a composition bias toward polar residues. Residues 179-203 (SKSGESASDGSSEGSDGNSQNDSGS) show a composition bias toward low complexity. The segment covering 216–228 (NGGSANGPQNGSA) has biased composition (polar residues). Positions 305–368 (ELKRQRRKQS…EELTTENTSL (64 aa)) constitute a bZIP domain. The Bipartite nuclear localization signal motif lies at 307–323 (KRQRRKQSNRESARRSR). The interval 307–326 (KRQRRKQSNRESARRSRLRK) is basic motif. The span at 314–327 (SNRESARRSRLRKQ) shows a compositional bias: basic and acidic residues. A leucine-zipper region spans residues 333–368 (LAQRAEVLNEENTNLRAEINKLKSQCEELTTENTSL). Basic and acidic residues predominate over residues 398-409 (AERKVDSYKDST).

Belongs to the bZIP family. Monomer, homodimer and heterodimers with BZIP68 and GBF1/BZIP41. Heterodimers with GBF2/BZIP54 and GBF3/BZIP55. Binds DNA as monomer and forms homo- and heterodimers. The monomeric form is redox regulated. Interacts with GIP1.

The protein resides in the nucleus. Transcriptional activator that binds to the G-box motif (5'-CACGTG-3') and other cis-acting elements with 5'-ACGT-3' core, such as Hex, C-box and as-1 motifs. Possesses high binding affinity to G-box, much lower affinity to Hex and C-box, and little affinity to as-1 element. G-box and G-box-like motifs are cis-acting elements defined in promoters of certain plant genes which are regulated by such diverse stimuli as light-induction or hormone control. Binds to the G-box motif 5'-CACGTG-3' of LHCB2.4 (At3g27690) promoter. May act as transcriptional repressor in light-regulated expression of LHCB2.4. Binds DNA as monomer. DNA-binding activity is redox-dependent. This is bZIP transcription factor 16 from Arabidopsis thaliana (Mouse-ear cress).